The primary structure comprises 376 residues: Growth/differentiation factor 8 (376 aa).

The N-terminal stretch at 1-22 (MHLSQIVLYLSLLIALGPVVLS) is a signal peptide. Residues 23–267 (DQEAHQQPSV…ISEGPRRARR (245 aa)) constitute a propeptide that is removed on maturation. 4 disulfides stabilise this stretch: Cys-273–Cys-283, Cys-282–Cys-341, Cys-310–Cys-373, and Cys-314–Cys-375.

The protein belongs to the TGF-beta family. In terms of assembly, homodimer; disulfide-linked. Highly expressed in muscle. Also expressed in other tissues such as eye, gill, ovary, gut and brain. Very low level detected in testis. Not expressed in liver, kidney, stomach or heart.

It localises to the secreted. In terms of biological role, acts specifically as a negative regulator of skeletal muscle growth. The protein is Growth/differentiation factor 8 of Oreochromis mossambicus (Mozambique tilapia).